A 164-amino-acid polypeptide reads, in one-letter code: T-cell surface glycoprotein CD3 zeta chain (164 aa).

An N-terminal signal peptide occupies residues 1–21; sequence MKWKVSVLACILHVRFPGAEA. Gln22 is subject to Blocked amino end (Gln). The Extracellular portion of the chain corresponds to 22-30; that stretch reads QSFGLLDPK. A helical transmembrane segment spans residues 31–51; it reads LCYLLDGILFIYGVIITALYL. The Cytoplasmic segment spans residues 52–164; sequence RAKFSRSAET…ALHMQTLAPR (113 aa). Ser58 is modified (phosphoserine). 3 ITAM domains span residues 61 to 89, 100 to 128, and 131 to 159; these read TAAN…LEKK, QQRR…EIGT, and ERRR…LHMQ. Phosphotyrosine is present on residues Tyr72 and Tyr83. The segment covering 87–96 has biased composition (basic and acidic residues); the sequence is EKKRARDPEM. The disordered stretch occupies residues 87-111; sequence EKKRARDPEMGGKQQRRRNPQEGVY. A phosphotyrosine mark is found at Tyr111, Tyr123, Tyr142, and Tyr153. Residues 124-143 are disordered; that stretch reads SEIGTKGERRRGKGHDGLYQ.

The protein belongs to the CD3Z/FCER1G family. As to quaternary structure, the TCR-CD3 complex is composed of a CD3D/CD3E and a CD3G/CD3E heterodimers that preferentially associate with TCRalpha and TCRbeta, respectively, to form TCRalpha/CD3E/CD3G and TCRbeta/CD3G/CD3E trimers. In turn, the hexamer interacts with CD3Z homodimer to form the TCR-CD3 complex. Alternatively, TCRalpha and TCRbeta can be replaced by TCRgamma and TCRdelta. Interacts with SLA. Interacts with SLA2. Interacts with TRAT1. Interacts with DOCK2. Interacts with SHB. Interacts with ZAP70. Interacts (tyrosine phosphorylated) with SHC1 (via SH2 domain). Interacts with PTPRC. Interacts with CRK; this interaction regulates CD3Z phosphorylation. Interacts (on T cell side) with CD81, ICAM1 and CD9 at immunological synapses between antigen-presenting cells and T cells. Interacts with CD160. Interacts with LY6E. Interacts with LY6E. The signaling subunit of immunoglobulin gamma (IgG) Fc receptor complex. As a homodimer or a heterodimer with FCER1G, associates with the ligand binding subunit FCGR3A (via transmembrane domain); this interaction is a prerequisite for Fc receptor complex expression on the cell surface. Interacts with CD5. In terms of processing, phosphorylated on Tyr residues after T-cell receptor triggering by LCK in association with CD4/CD8. CD3Z is expressed in normal lymphoid tissue and in peripheral blood mononuclear cells (PBMCs). Expressed also in retinal ganglion cells.

It is found in the cell membrane. Its function is as follows. Part of the TCR-CD3 complex present on T-lymphocyte cell surface that plays an essential role in adaptive immune response. When antigen presenting cells (APCs) activate T-cell receptor (TCR), TCR-mediated signals are transmitted across the cell membrane by the CD3 chains CD3D, CD3E, CD3G and CD3Z. All CD3 chains contain immunoreceptor tyrosine-based activation motifs (ITAMs) in their cytoplasmic domain. Upon TCR engagement, these motifs become phosphorylated by Src family protein tyrosine kinases LCK and FYN, resulting in the activation of downstream signaling pathways. CD3Z ITAMs phosphorylation creates multiple docking sites for the protein kinase ZAP70 leading to ZAP70 phosphorylation and its conversion into a catalytically active enzyme. Plays an important role in intrathymic T-cell differentiation. Additionally, participates in the activity-dependent synapse formation of retinal ganglion cells (RGCs) in both the retina and dorsal lateral geniculate nucleus (dLGN). The sequence is that of T-cell surface glycoprotein CD3 zeta chain (Cd247) from Mus musculus (Mouse).